A 189-amino-acid polypeptide reads, in one-letter code: MSTVAWDFAERRLGLNLDILYPNGTAYNFRVIQDYTTGTQFTIFERYRFCAKQKAPMPEPENCIPGNTSVRFRGFLGAGKDRIDYDLYTMKLTKEETGNLEGEGTFSVVRGTEYDIPLSNSFIGTYFDGETPYAQVSNGGYYNIEIGIDDPKRWFDVPDYCPKELTDLTMIPKHIPKWTWIRLPAPRLF.

Endoderm cells.

This Lytechinus variegatus (Green sea urchin) protein is Development-specific protein LVN1.2.